Here is a 195-residue protein sequence, read N- to C-terminus: Imidazoleglycerol-phosphate dehydratase (195 aa).

This sequence belongs to the imidazoleglycerol-phosphate dehydratase family.

It localises to the cytoplasm. It catalyses the reaction D-erythro-1-(imidazol-4-yl)glycerol 3-phosphate = 3-(imidazol-4-yl)-2-oxopropyl phosphate + H2O. It participates in amino-acid biosynthesis; L-histidine biosynthesis; L-histidine from 5-phospho-alpha-D-ribose 1-diphosphate: step 6/9. The protein is Imidazoleglycerol-phosphate dehydratase of Deinococcus deserti (strain DSM 17065 / CIP 109153 / LMG 22923 / VCD115).